A 468-amino-acid chain; its full sequence is 6-phosphogluconate dehydrogenase, decarboxylating (468 aa).

NADP(+)-binding positions include 9–14 (GLAVMG), 32–34 (NRS), 73–75 (VQA), and asparagine 101. Residues asparagine 101 and 127–129 (SGG) contribute to the substrate site. Lysine 182 (proton acceptor) is an active-site residue. 185–186 (HN) provides a ligand contact to substrate. Residue glutamate 189 is the Proton donor of the active site. Substrate-binding residues include tyrosine 190, lysine 259, arginine 286, arginine 444, and histidine 450.

Belongs to the 6-phosphogluconate dehydrogenase family. In terms of assembly, homodimer.

It carries out the reaction 6-phospho-D-gluconate + NADP(+) = D-ribulose 5-phosphate + CO2 + NADPH. It functions in the pathway carbohydrate degradation; pentose phosphate pathway; D-ribulose 5-phosphate from D-glucose 6-phosphate (oxidative stage): step 3/3. Functionally, catalyzes the oxidative decarboxylation of 6-phosphogluconate to ribulose 5-phosphate and CO(2), with concomitant reduction of NADP to NADPH. In Staphylococcus aureus (strain Mu50 / ATCC 700699), this protein is 6-phosphogluconate dehydrogenase, decarboxylating (gnd).